The following is a 170-amino-acid chain: Zinc finger matrin-type protein 5 (170 aa).

The segment at 51–79 (EQNKRPCRKFLLTGQCDFGSNCRFSHMSE) adopts a C3H1-type zinc-finger fold. A disordered region spans residues 150 to 170 (PPSLRAPPPGGWPLQPRVQWG).

Component of the U11/U12 snRNPs that are part of the U12-type spliceosome. Not found in the major spliceosome.

It is found in the nucleus. This chain is Zinc finger matrin-type protein 5 (ZMAT5), found in Homo sapiens (Human).